We begin with the raw amino-acid sequence, 43 residues long: Kappa-actitoxin-Avd4p (43 aa).

Disulfide bonds link cysteine 4–cysteine 39, cysteine 6–cysteine 32, and cysteine 22–cysteine 40.

The protein resides in the secreted. The protein localises to the nematocyst. In terms of biological role, blocks Kv3 voltage-gated potassium channels. Reduces blood pressure. This chain is Kappa-actitoxin-Avd4p, found in Anemonia viridis (Snakelocks anemone).